A 296-amino-acid polypeptide reads, in one-letter code: 5'-3' exonuclease (296 aa).

In terms of domain architecture, 5'-3' exonuclease spans 175–262 (VMPKALIDIK…VPLACTLKDA (88 aa)).

Its function is as follows. 5'-3' exonuclease acting preferentially on double-stranded DNA. This Bacillus subtilis (strain 168) protein is 5'-3' exonuclease (ypcP).